The primary structure comprises 316 residues: Olfactory receptor 51J1 (316 aa).

Residues 1–31 (MKISNNSLGFLPTTFILVGIPGLESEHLWIS) lie on the Extracellular side of the membrane. An N-linked (GlcNAc...) asparagine glycan is attached at Asn5. Residues 32-52 (VPFSLIYIIIFLGNGIILHVI) traverse the membrane as a helical segment. Residues 53–63 (RTDIALHQPMY) lie on the Cytoplasmic side of the membrane. A helical transmembrane segment spans residues 64–84 (LFLAMLALAEVRVSASTLPTV). Topologically, residues 85-104 (LGIFLFGNTEISLEACLFPD) are extracellular. Residues Cys100 and Cys191 are joined by a disulfide bond. Residues 105–125 (VLHPFFIHDGASCAAGHVFGP) form a helical membrane-spanning segment. Residues 126 to 161 (LYSHLQPTELHSYPDTAQGLWHRSYYRTEKHYAHGS) are Cytoplasmic-facing. Residues 162–182 (VAHSLMASALLWPQCPLTFLL) form a helical membrane-spanning segment. The Extracellular segment spans residues 183-191 (SAPQSYLSC). Residues 192–212 (GNISVNNIYGIFIVTSTFGLD) form a helical membrane-spanning segment. Residues 213–242 (SLLIVISYGLILHTVLGIATGEGRKKALNT) are Cytoplasmic-facing. The helical transmembrane segment at 243 to 263 (CGSHVCAVLAYYVPMIGLSIV) threads the bilayer. Over 264–275 (HRLGHRVSPLLQ) the chain is Extracellular. A helical membrane pass occupies residues 276-296 (AMMANAYLFFPPVVNPIVYSI). Residues 297 to 316 (KTKEIHGAIVRMLLEKRRRV) are Cytoplasmic-facing.

It belongs to the G-protein coupled receptor 1 family.

It is found in the cell membrane. In terms of biological role, odorant receptor. The chain is Olfactory receptor 51J1 (OR51J1) from Homo sapiens (Human).